The sequence spans 96 residues: Neutrophil defensin 3 (96 aa).

Residues 1 to 19 form the signal peptide; it reads MRTLVILAAILLVALQAQA. Positions 20–66 are excised as a propeptide; the sequence is EPLQARTDEATAAQEQIPTDNPEVVVSLAWDESLAPKDSVPGLRKNM. 3 cysteine pairs are disulfide-bonded: Cys-68-Cys-96, Cys-70-Cys-85, and Cys-75-Cys-95.

It localises to the secreted. Functionally, has bacteriostatic activity against Gram-positive bacteria S.aureus and L.monocytogenes and Gram-negative bacterium E.coli and antifungal activity against C.neoformans. This Macaca mulatta (Rhesus macaque) protein is Neutrophil defensin 3.